A 326-amino-acid polypeptide reads, in one-letter code: DNA-directed RNA polymerase subunit alpha (326 aa).

Residues 1–232 (MQGSARNFLK…EQLSSFVELE (232 aa)) are alpha N-terminal domain (alpha-NTD). An alpha C-terminal domain (alpha-CTD) region spans residues 246-326 (FDPQLLAAVD…NWPPVDLMSE (81 aa)).

This sequence belongs to the RNA polymerase alpha chain family. In terms of assembly, homodimer. The RNAP catalytic core consists of 2 alpha, 1 beta, 1 beta' and 1 omega subunit. When a sigma factor is associated with the core the holoenzyme is formed, which can initiate transcription.

It catalyses the reaction RNA(n) + a ribonucleoside 5'-triphosphate = RNA(n+1) + diphosphate. Its function is as follows. DNA-dependent RNA polymerase catalyzes the transcription of DNA into RNA using the four ribonucleoside triphosphates as substrates. This is DNA-directed RNA polymerase subunit alpha from Ruthia magnifica subsp. Calyptogena magnifica.